The chain runs to 957 residues: Protein CRT10 (957 aa).

A disordered region spans residues 695 to 719 (NSTEEDDVNSDPENEESGSSLTSFQ). Positions 697 to 710 (TEEDDVNSDPENEE) are enriched in acidic residues. Serine 704 bears the Phosphoserine mark.

Component of a cullin-RING ligase (CRL) composed of 4 subunits: the RING protein HRT1, the cullin RTT101, a linker protein MMS1, and the substrate receptor CRT10. Interacts with MMS1.

Functionally, substrate targeting component of a cullin-RING-based E3 ubiquitin-protein ligase complex RTT101(MMS1-CRT10). RTT101(MMS1-CRT10) may regulate nucleotide synthesis through transcriptional regulation of RNR genes encoding ribonucleotide reductases. The sequence is that of Protein CRT10 (CRT10) from Saccharomyces cerevisiae (strain ATCC 204508 / S288c) (Baker's yeast).